Reading from the N-terminus, the 1093-residue chain is ATP-dependent helicase/deoxyribonuclease subunit B (1093 aa).

The protein belongs to the helicase family. AddB/RexB type 2 subfamily. In terms of assembly, heterodimer of AddA and RexB. It depends on Mg(2+) as a cofactor.

The heterodimer acts as both an ATP-dependent DNA helicase and an ATP-dependent, dual-direction single-stranded exonuclease. Recognizes the chi site generating a DNA molecule suitable for the initiation of homologous recombination. This subunit has 5' -&gt; 3' nuclease activity but not helicase activity. This Streptococcus sanguinis (strain SK36) protein is ATP-dependent helicase/deoxyribonuclease subunit B.